The sequence spans 658 residues: Squalene--hopene cyclase (658 aa).

A PFTB 1 repeat occupies 69-110 (EAKIGRYLRRIQGEHGGWSLFYGGDLDLSATVKAYFALKMIG). The Proton donor role is filled by Asp-392. PFTB repeat units follow at residues 418 to 459 (KARA…GALL), 486 to 526 (MKAA…NVAA), and 534 to 584 (IQKA…GLMA).

This sequence belongs to the terpene cyclase/mutase family.

Its subcellular location is the cell membrane. It carries out the reaction squalene = hop-22(29)-ene. It catalyses the reaction squalene + H2O = hopan-22-ol. It participates in secondary metabolite biosynthesis; hopanoid biosynthesis. Catalyzes the cyclization of squalene into hopene. The polypeptide is Squalene--hopene cyclase (shc) (Zymomonas mobilis subsp. mobilis (strain ATCC 31821 / ZM4 / CP4)).